The primary structure comprises 113 residues: Ribonuclease P protein component (113 aa).

It belongs to the RnpA family. In terms of assembly, consists of a catalytic RNA component (M1 or rnpB) and a protein subunit.

It carries out the reaction Endonucleolytic cleavage of RNA, removing 5'-extranucleotides from tRNA precursor.. Its function is as follows. RNaseP catalyzes the removal of the 5'-leader sequence from pre-tRNA to produce the mature 5'-terminus. It can also cleave other RNA substrates such as 4.5S RNA. The protein component plays an auxiliary but essential role in vivo by binding to the 5'-leader sequence and broadening the substrate specificity of the ribozyme. The polypeptide is Ribonuclease P protein component (Ligilactobacillus salivarius (strain UCC118) (Lactobacillus salivarius)).